The primary structure comprises 184 residues: Photosystem I assembly protein Ycf4 (184 aa).

2 helical membrane-spanning segments follow: residues 21-43 (NFCW…ISSY) and 68-90 (FYGI…NVGS).

The protein belongs to the Ycf4 family.

The protein localises to the plastid. Its subcellular location is the chloroplast thylakoid membrane. Seems to be required for the assembly of the photosystem I complex. The protein is Photosystem I assembly protein Ycf4 of Physcomitrium patens (Spreading-leaved earth moss).